A 176-amino-acid chain; its full sequence is Probable chorismate pyruvate-lyase (176 aa).

Residues Arg-70, Leu-108, and Glu-166 each coordinate substrate.

This sequence belongs to the UbiC family.

It localises to the cytoplasm. It catalyses the reaction chorismate = 4-hydroxybenzoate + pyruvate. Its pathway is cofactor biosynthesis; ubiquinone biosynthesis. Removes the pyruvyl group from chorismate, with concomitant aromatization of the ring, to provide 4-hydroxybenzoate (4HB) for the ubiquinone pathway. This is Probable chorismate pyruvate-lyase from Dechloromonas aromatica (strain RCB).